We begin with the raw amino-acid sequence, 132 residues long: D-ribose pyranase (132 aa).

His-20 acts as the Proton donor in catalysis. Residues Asp-28, His-98, and 120-122 (YAN) each bind substrate.

Belongs to the RbsD / FucU family. RbsD subfamily. As to quaternary structure, homodecamer.

It localises to the cytoplasm. It catalyses the reaction beta-D-ribopyranose = beta-D-ribofuranose. The protein operates within carbohydrate metabolism; D-ribose degradation; D-ribose 5-phosphate from beta-D-ribopyranose: step 1/2. In terms of biological role, catalyzes the interconversion of beta-pyran and beta-furan forms of D-ribose. The chain is D-ribose pyranase from Geobacillus thermodenitrificans (strain NG80-2).